A 504-amino-acid chain; its full sequence is Cytochrome P450 6B7 (504 aa).

Cysteine 445 contributes to the heme binding site.

The protein belongs to the cytochrome P450 family. Heme is required as a cofactor.

The protein resides in the endoplasmic reticulum membrane. The protein localises to the microsome membrane. The catalysed reaction is an organic molecule + reduced [NADPH--hemoprotein reductase] + O2 = an alcohol + oxidized [NADPH--hemoprotein reductase] + H2O + H(+). The polypeptide is Cytochrome P450 6B7 (CYP6B7) (Helicoverpa armigera (Cotton bollworm)).